The primary structure comprises 218 residues: Ras-related protein Rab-11B (218 aa).

Gly-2 is modified (N-acetylglycine). The residue at position 4 (Arg-4) is a Citrulline. The GTP site is built by Ser-20, Gly-21, Gly-23, Lys-24, Ser-25, Asn-26, Asn-37, Leu-38, Ser-40, Ser-42, and Thr-43. Residue Ser-25 participates in Mg(2+) binding. A Switch 1 motif is present at residues 36 to 47; it reads FNLESKSTIGVE. Residues Thr-43 and Asp-66 each contribute to the Mg(2+) site. Positions 67–86 match the Switch 2 motif; that stretch reads TAGQERYRAITSAYYRGAVG. Gly-69, Asn-124, Lys-125, Asp-127, Ala-155, and Leu-156 together coordinate GTP. A disordered region spans residues 184 to 218; that stretch reads RAAHDESPGNNVVDISVPPTTDGQRPNKLQCCQSL. Residues Cys-214 and Cys-215 are each lipidated (S-geranylgeranyl cysteine). Cys-215 is modified (cysteine methyl ester). Residues 216–218 constitute a propeptide, removed in mature form; that stretch reads QSL.

The protein belongs to the small GTPase superfamily. Rab family. Interacts with KCNMA1. Interacts with RAB11FIP1, RAB11FIP2, RAB11FIP3 and RAB11FIP4. May interact with TBC1D14. Interacts with ATP6V1E1. Interacts with PI4KB. Interacts (GDP-bound form) with ZFYVE27. Interacts (GDP-bound form) with KIF5A in a ZFYVE27-dependent manner. Interacts with RELCH. Interacts (in GTP-bound form) with TBC1D8B (via domain Rab-GAP TBC). Forms a complex containing RAB11B, ASAP1, Rabin8/RAB3IP, RAP11FIP3 and ARF4. Interacts with WDR44. Mg(2+) serves as cofactor. Citrullinated by PADI4. Abundantly expressed in brain, heart and testis. Also detected in kidney and pancreatic islets.

It is found in the recycling endosome membrane. The protein resides in the cytoplasmic vesicle. It localises to the secretory vesicle. Its subcellular location is the synaptic vesicle membrane. The protein localises to the phagosome membrane. The enzyme catalyses GTP + H2O = GDP + phosphate + H(+). Regulated by guanine nucleotide exchange factors (GEFs) which promote the exchange of bound GDP for free GTP. Regulated by GTPase activating proteins (GAPs) which increase the GTP hydrolysis activity. Inhibited by GDP dissociation inhibitors (GDIs) which prevent Rab-GDP dissociation. Its function is as follows. The small GTPases Rab are key regulators of intracellular membrane trafficking, from the formation of transport vesicles to their fusion with membranes. Rabs cycle between an inactive GDP-bound form and an active GTP-bound form that is able to recruit to membranes different set of downstream effectors directly responsible for vesicle formation, movement, tethering and fusion. The small Rab GTPase RAB11B plays a role in endocytic recycling, regulating apical recycling of several transmembrane proteins including cystic fibrosis transmembrane conductance regulator/CFTR, epithelial sodium channel/ENaC, potassium voltage-gated channel, and voltage-dependent L-type calcium channel. May also regulate constitutive and regulated secretion, like insulin granule exocytosis. Required for melanosome transport and release from melanocytes. Also regulates V-ATPase intracellular transport in response to extracellular acidosis. Promotes Rabin8/RAB3IP preciliary vesicular trafficking to mother centriole by forming a ciliary targeting complex containing Rab11, ASAP1, Rabin8/RAB3IP, RAB11FIP3 and ARF4, thereby regulating ciliogenesis initiation. On the contrary, upon LPAR1 receptor signaling pathway activation, interaction with phosphorylated WDR44 prevents Rab11-RAB3IP-RAB11FIP3 complex formation and cilia growth. The chain is Ras-related protein Rab-11B from Mus musculus (Mouse).